Here is a 123-residue protein sequence, read N- to C-terminus: Cysteine proteinase inhibitor 8 (123 aa).

Positions 1–19 are cleaved as a signal peptide; the sequence is MARIPLLLALLLAVSAAAA. Residues 33–91 enclose the Cystatin domain; that stretch reads GGWSPITDVGDPHIQELGGWAVERHASLSSDGLRFRRVTSGEQQVVSGMNYRLVVSASD. Positions 76–80 match the Secondary area of contact motif; that stretch reads QVVSG.

This sequence belongs to the cystatin family. Phytocystatin subfamily.

Its subcellular location is the secreted. Specific inhibitor of cysteine proteinases. Probably involved in the regulation of endogenous processes and in defense against pests and pathogens. The chain is Cysteine proteinase inhibitor 8 from Oryza sativa subsp. japonica (Rice).